The primary structure comprises 338 residues: MSSLRLLISDSYDPWFNLAVEECIFRQMSPDQRVLFLWRNADTVVIGRAQNPWKECNTRRMEQDGVKLARRSSGGGAVFHDLGNTCFTFMAGKPEYDKTISTQIILNALASLGIQATASGRNDLVVIKDDGERKVSGSAYKETKDRGFHHGTLLLNADLNRLADYLNPDPKKLQAKGITSVRSRVTNLVELLPGINHEKICAAIEQAFFNYYDEKVFAEIISPQALPDLPGFAEQFAKQSSWEWNFGQAPAFSHLVDTRFVWGGIELHFDVLHGAIDRCQIFTDSLNPAPLEALAERLQGVEYRPAAIDAVCLQLSDDFPESQAELLQVQCWLAEVLR.

Residues 29 to 216 (SPDQRVLFLW…AFFNYYDEKV (188 aa)) form the BPL/LPL catalytic domain. Residues Arg71, 76–79 (GAVF), and Lys134 each bind ATP. Lys134 provides a ligand contact to (R)-lipoate.

It belongs to the LplA family. Monomer.

Its subcellular location is the cytoplasm. The catalysed reaction is L-lysyl-[lipoyl-carrier protein] + (R)-lipoate + ATP = N(6)-[(R)-lipoyl]-L-lysyl-[lipoyl-carrier protein] + AMP + diphosphate + H(+). The protein operates within protein modification; protein lipoylation via exogenous pathway; protein N(6)-(lipoyl)lysine from lipoate: step 1/2. It functions in the pathway protein modification; protein lipoylation via exogenous pathway; protein N(6)-(lipoyl)lysine from lipoate: step 2/2. Its function is as follows. Catalyzes both the ATP-dependent activation of exogenously supplied lipoate to lipoyl-AMP and the transfer of the activated lipoyl onto the lipoyl domains of lipoate-dependent enzymes. This Yersinia enterocolitica serotype O:8 / biotype 1B (strain NCTC 13174 / 8081) protein is Lipoate-protein ligase A.